The sequence spans 352 residues: Probable dual-specificity RNA methyltransferase RlmN (352 aa).

The active-site Proton acceptor is E93. The Radical SAM core domain maps to F99 to D333. Residues C106 and C336 are joined by a disulfide bond. [4Fe-4S] cluster-binding residues include C113, C117, and C120. Residues G164–E165, S196, and N295 each bind S-adenosyl-L-methionine. Catalysis depends on C336, which acts as the S-methylcysteine intermediate.

It belongs to the radical SAM superfamily. RlmN family. [4Fe-4S] cluster is required as a cofactor.

The protein resides in the cytoplasm. It carries out the reaction adenosine(2503) in 23S rRNA + 2 reduced [2Fe-2S]-[ferredoxin] + 2 S-adenosyl-L-methionine = 2-methyladenosine(2503) in 23S rRNA + 5'-deoxyadenosine + L-methionine + 2 oxidized [2Fe-2S]-[ferredoxin] + S-adenosyl-L-homocysteine. The catalysed reaction is adenosine(37) in tRNA + 2 reduced [2Fe-2S]-[ferredoxin] + 2 S-adenosyl-L-methionine = 2-methyladenosine(37) in tRNA + 5'-deoxyadenosine + L-methionine + 2 oxidized [2Fe-2S]-[ferredoxin] + S-adenosyl-L-homocysteine. Functionally, specifically methylates position 2 of adenine 2503 in 23S rRNA and position 2 of adenine 37 in tRNAs. The polypeptide is Probable dual-specificity RNA methyltransferase RlmN (Malacoplasma penetrans (strain HF-2) (Mycoplasma penetrans)).